A 201-amino-acid polypeptide reads, in one-letter code: Potassium-transporting ATPase KdpC subunit (201 aa).

The helical transmembrane segment at 12-34 (LLALTMITGLAYPLAVTGLATVL) threads the bilayer. The segment at 73 to 102 (TVAPDPADSSKTVSAPYNAANSGGSNLGPT) is disordered. A compositionally biased stretch (polar residues) spans 81–101 (SSKTVSAPYNAANSGGSNLGP).

It belongs to the KdpC family. In terms of assembly, the system is composed of three essential subunits: KdpA, KdpB and KdpC.

It is found in the cell inner membrane. Part of the high-affinity ATP-driven potassium transport (or Kdp) system, which catalyzes the hydrolysis of ATP coupled with the electrogenic transport of potassium into the cytoplasm. This subunit acts as a catalytic chaperone that increases the ATP-binding affinity of the ATP-hydrolyzing subunit KdpB by the formation of a transient KdpB/KdpC/ATP ternary complex. The protein is Potassium-transporting ATPase KdpC subunit of Rhodopseudomonas palustris (strain ATCC BAA-98 / CGA009).